A 1720-amino-acid chain; its full sequence is Merozoite surface protein 1 (1720 aa).

An N-terminal signal peptide occupies residues 1–19 (MKIIFFLCSFLFFIINTQC). Residues 63–112 (ASAQSGASAQSGASAQSGASAQSGASAQSGASAQSGTSGPSGPSGTSPSS) are compositionally biased toward low complexity. The disordered stretch occupies residues 63-137 (ASAQSGASAQ…PPADASDSDA (75 aa)). Positions 113-122 (RSNTLPRSNT) are enriched in polar residues. The span at 123 to 132 (SSGASPPADA) shows a compositional bias: low complexity. Positions 474-519 (INNIKKKIDLEEKNINHTKEQNKKLLEDYEKSKKDYEELLEKFYEM) form a coiled coil. 4 disordered regions span residues 723-775 (SETT…PPKE), 908-955 (TGTS…SGPA), 1249-1278 (TPPQ…TQIP), and 1470-1491 (KEKF…DEQK). A compositionally biased stretch (acidic residues) spans 743–753 (EVTEETEETEE). A compositionally biased stretch (low complexity) spans 908–946 (TGTSSTSSPGNTTVNTAQSATHSNSQNQQSNASSTNTQN). A compositionally biased stretch (polar residues) spans 1264–1278 (VSGSSGSTKEETQIP). Residues 1475-1484 (SSPPTTPPSP) show a composition bias toward pro residues. EGF-like domains lie at 1611–1651 (HQCV…VENP) and 1652–1693 (NPTC…YPLF). Cystine bridges form between cysteine 1613-cysteine 1624, cysteine 1618-cysteine 1634, cysteine 1636-cysteine 1647, cysteine 1655-cysteine 1668, cysteine 1662-cysteine 1682, and cysteine 1684-cysteine 1698. Serine 1699 carries GPI-anchor amidated serine lipidation. A propeptide spans 1700-1720 (SSNFLGISFLLILMLILYSFI) (removed in mature form).

As to quaternary structure, forms a complex composed of subunits p83, p30, p38, and p42 which remain non-covalently associated; the complex is formed at the merozoite surface prior to egress from host erythrocytes. Forms a complex composed of processed MSP1 subunits, MSP6 subunit p36 and MSP7; the complex is formed at the merozoite surface prior to egress from host erythrocytes. Within the complex, interacts (via subunit p38) with MSP6 subunit p36 and (via subunits p83, p30 and p38) with MSP7 (via subunit p22). Forms a complex composed of MSP1, MSP6, DBLMSP1 and DBLMSP2. Within the complex, interacts (via subunit p38) with DBLMSP1 and DBLMSP2. Forms a complex composed of MSP1, and rhoptry proteins RhopH3, RAP1 and CLAG9/RhopH3. Within the complex, interacts (via subunits p42 and p19) with RhopH3 (via C-terminus). Forms a complex composed of MSP1, MSP6, MSP7, MSP9 and MSP3; within the complex, MSP6 and MSP9 mediate the binding to the host erythrocyte. Interacts (via subunits p19 and p42) with MSP9; the interaction is direct; MSP1 subunits p19 or p42, and MSP9 form a co-ligand complex that interacts with host SLC4A1/Band 3 protein. May interact with PFD6. Interacts with host spectrin. Interacts with host glycophorin GYPA in a sialic acid-independent manner. In terms of assembly, interacts with host proinflammatory cytokine S100P; the interaction blocks S100P inflammatory and chemotactic activities. As to quaternary structure, interacts with host SLC4A1/Band 3 (via 5ABC region) on the host erythrocyte surface in a sialic acid-independent manner. In terms of processing, the p190 precursor is cleaved by SUB1 prior to merozoite egress into 4 subunits p83, p30, p38, and p42 which remain non-covalently associated. SUB1-mediated proteolytic cleavage occurs in an orderly manner; the first cleavage occurs at the p30/p38 site, followed by cleavage at the p83/p30 site, in the 3D7 strain a second cleavage occurs at the N-terminus of p83, the last cleavage occurs at the p38/p42 site. The order of cleavage is essential for parasite viability. SUB1-mediated processing is essential for merozoite egress. In a second processing step during erythrocyte invasion, p42 is cleaved by SUB2 into p33 and p19; the latter remains attached to the merozoite surface via its GPI-anchor and is endocytosed during the subsequent ring stage.

The protein resides in the cell membrane. Its subcellular location is the secreted. It localises to the vacuole membrane. In terms of biological role, during the asexual blood stage, involved in merozoite egress from host erythrocytes possibly via its interaction with the host cytoskeleton protein spectrin resulting in the destabilization of the host cytoskeleton and thus leading to erythrocyte cell membrane rupture. Involved in the binding to host erythrocytes and is required for host erythrocyte invasion. By binding to host proinflammatory cytokine S100P may interfere with host immune responses. Its function is as follows. Involved in merozoite invasion of host erythrocytes. May play a role in the biogenesis and/or function of the food vacuole during the intraerythrocytic development. In Plasmodium falciparum (isolate 3D7), this protein is Merozoite surface protein 1.